The chain runs to 154 residues: D-aminoacyl-tRNA deacylase (154 aa).

Positions 142–143 (GP) match the Gly-cisPro motif, important for rejection of L-amino acids motif.

Belongs to the DTD family. Homodimer.

It is found in the cytoplasm. The enzyme catalyses glycyl-tRNA(Ala) + H2O = tRNA(Ala) + glycine + H(+). It carries out the reaction a D-aminoacyl-tRNA + H2O = a tRNA + a D-alpha-amino acid + H(+). Functionally, an aminoacyl-tRNA editing enzyme that deacylates mischarged D-aminoacyl-tRNAs. Also deacylates mischarged glycyl-tRNA(Ala), protecting cells against glycine mischarging by AlaRS. Acts via tRNA-based rather than protein-based catalysis; rejects L-amino acids rather than detecting D-amino acids in the active site. By recycling D-aminoacyl-tRNA to D-amino acids and free tRNA molecules, this enzyme counteracts the toxicity associated with the formation of D-aminoacyl-tRNA entities in vivo and helps enforce protein L-homochirality. The polypeptide is D-aminoacyl-tRNA deacylase (Acidovorax sp. (strain JS42)).